The sequence spans 313 residues: Extracellular metalloprotease (313 aa).

The first 34 residues, 1-34 (MKLVPRFRKQWFAYLTVLCLALAAAVSFGVPAKA), serve as a signal peptide directing secretion. A disordered region spans residues 35-74 (AENPQTSVSNTGKEADATKNQTSKADQVSAPYEGTGKTSK). The propeptide occupies 35–93 (AENPQTSVSNTGKEADATKNQTSKADQVSAPYEGTGKTSKSLYGGQTELEKNIQTLQPS). The segment covering 37–60 (NPQTSVSNTGKEADATKNQTSKAD) has biased composition (polar residues). Cysteines 131 and 147 form a disulfide. Catalysis depends on charge relay system residues H146 and S267.

This sequence belongs to the peptidase S1B family. In terms of assembly, monomer.

The protein resides in the secreted. In Bacillus subtilis (strain 168), this protein is Extracellular metalloprotease (mpr).